A 176-amino-acid chain; its full sequence is NADH-quinone oxidoreductase subunit I 2 (176 aa).

4Fe-4S ferredoxin-type domains are found at residues 45–77 and 87–116; these read IVLTRDPDGGERCVACYLCSAACPVDCISMEAA and RWFRINFSRCIFCGLCAEACPTLAIQMTPD. C57, C60, C63, C67, C96, C99, C102, and C106 together coordinate [4Fe-4S] cluster.

This sequence belongs to the complex I 23 kDa subunit family. As to quaternary structure, NDH-1 is composed of 14 different subunits. Subunits NuoA, H, J, K, L, M, N constitute the membrane sector of the complex. It depends on [4Fe-4S] cluster as a cofactor.

The protein resides in the cell inner membrane. The enzyme catalyses a quinone + NADH + 5 H(+)(in) = a quinol + NAD(+) + 4 H(+)(out). In terms of biological role, NDH-1 shuttles electrons from NADH, via FMN and iron-sulfur (Fe-S) centers, to quinones in the respiratory chain. The immediate electron acceptor for the enzyme in this species is believed to be ubiquinone. Couples the redox reaction to proton translocation (for every two electrons transferred, four hydrogen ions are translocated across the cytoplasmic membrane), and thus conserves the redox energy in a proton gradient. In Geobacter sulfurreducens (strain ATCC 51573 / DSM 12127 / PCA), this protein is NADH-quinone oxidoreductase subunit I 2.